The sequence spans 272 residues: Dermonecrotic toxin LvSicTox-alphaIC1biii (272 aa).

H5 is an active-site residue. Positions 25 and 27 each coordinate Mg(2+). H41 (nucleophile) is an active-site residue. 2 disulfide bridges follow: C45–C51 and C47–C189. D84 lines the Mg(2+) pocket.

The protein belongs to the arthropod phospholipase D family. Class II subfamily. The cofactor is Mg(2+). As to expression, expressed by the venom gland.

The protein localises to the secreted. It carries out the reaction an N-(acyl)-sphingosylphosphocholine = an N-(acyl)-sphingosyl-1,3-cyclic phosphate + choline. It catalyses the reaction an N-(acyl)-sphingosylphosphoethanolamine = an N-(acyl)-sphingosyl-1,3-cyclic phosphate + ethanolamine. The catalysed reaction is a 1-acyl-sn-glycero-3-phosphocholine = a 1-acyl-sn-glycero-2,3-cyclic phosphate + choline. The enzyme catalyses a 1-acyl-sn-glycero-3-phosphoethanolamine = a 1-acyl-sn-glycero-2,3-cyclic phosphate + ethanolamine. Functionally, dermonecrotic toxins cleave the phosphodiester linkage between the phosphate and headgroup of certain phospholipids (sphingolipid and lysolipid substrates), forming an alcohol (often choline) and a cyclic phosphate. This toxin acts on sphingomyelin (SM). It may also act on ceramide phosphoethanolamine (CPE), lysophosphatidylcholine (LPC) and lysophosphatidylethanolamine (LPE), but not on lysophosphatidylserine (LPS), and lysophosphatidylglycerol (LPG). It acts by transphosphatidylation, releasing exclusively cyclic phosphate products as second products. Induces dermonecrosis, hemolysis, increased vascular permeability, edema, inflammatory response, and platelet aggregation. The protein is Dermonecrotic toxin LvSicTox-alphaIC1biii of Loxosceles variegata (Recluse spider).